The following is a 376-amino-acid chain: Coatomer subunit delta-4 (376 aa).

The tract at residues 65-92 is disordered; it reads LNTDTDTFTSRPKGRTSGGTTGAGKGIG. A compositionally biased stretch (gly residues) spans 80–92; it reads TSGGTTGAGKGIG. In terms of domain architecture, MHD spans 134–376; it reads SDPVTVAVEE…RLVADNYQVV (243 aa).

Belongs to the adaptor complexes medium subunit family. Delta-COP subfamily. In terms of assembly, oligomeric complex that consists of at least the alpha, beta, beta', gamma, delta, epsilon and zeta subunits.

It is found in the cytoplasm. Its subcellular location is the golgi apparatus membrane. It localises to the cytoplasmic vesicle. The protein resides in the COPI-coated vesicle membrane. The coatomer is a cytosolic protein complex that binds to dilysine motifs and reversibly associates with Golgi non-clathrin-coated vesicles, which further mediate biosynthetic protein transport from the ER, via the Golgi up to the trans Golgi network. Coatomer complex is required for budding from Golgi membranes, and is essential for the retrograde Golgi-to-ER transport of dilysine-tagged proteins. The sequence is that of Coatomer subunit delta-4 from Oryza sativa subsp. japonica (Rice).